The chain runs to 131 residues: Acanthoscurrin-2 (131 aa).

Position 130 is a lysine amide (lysine 130).

As to expression, expressed in hemocytes and secreted into the plasma following bacterial immune challenge.

Its subcellular location is the secreted. In terms of biological role, antimicrobial protein. Strong activity against the Gram-negative bacterium E.coli SBS363 and yeast C.albicans. No detectable activity against the Gram-positive bacterium M.luteus. The polypeptide is Acanthoscurrin-2 (Acanthoscurria gomesiana (Tarantula spider)).